Reading from the N-terminus, the 588-residue chain is L-fucose isomerase (588 aa).

Active-site proton acceptor residues include Glu-335 and Asp-359. The Mn(2+) site is built by Glu-335, Asp-359, and His-525.

This sequence belongs to the L-fucose isomerase family. Requires Mn(2+) as cofactor.

It localises to the cytoplasm. It catalyses the reaction L-fucose = L-fuculose. Its pathway is carbohydrate degradation; L-fucose degradation; L-lactaldehyde and glycerone phosphate from L-fucose: step 1/3. Functionally, converts the aldose L-fucose into the corresponding ketose L-fuculose. This Streptococcus pneumoniae (strain 70585) protein is L-fucose isomerase.